Here is a 220-residue protein sequence, read N- to C-terminus: NADH-quinone oxidoreductase subunit I (220 aa).

2 consecutive 4Fe-4S ferredoxin-type domains span residues 71–102 and 112–141; these read LQRL…IITH and DSYT…MGNR. Residues C82, C85, C88, C92, C121, C124, C127, and C131 each coordinate [4Fe-4S] cluster. A disordered region spans residues 187–220; that stretch reads MQATPLDYVQEPSKEESKEESPTSPESHKGDENV. Over residues 198-220 the composition is skewed to basic and acidic residues; it reads PSKEESKEESPTSPESHKGDENV.

Belongs to the complex I 23 kDa subunit family. NDH-1 is composed of 14 different subunits. Subunits NuoA, H, J, K, L, M, N constitute the membrane sector of the complex. [4Fe-4S] cluster is required as a cofactor.

The protein resides in the cell inner membrane. It catalyses the reaction a quinone + NADH + 5 H(+)(in) = a quinol + NAD(+) + 4 H(+)(out). Its function is as follows. NDH-1 shuttles electrons from NADH, via FMN and iron-sulfur (Fe-S) centers, to quinones in the respiratory chain. The immediate electron acceptor for the enzyme in this species is believed to be ubiquinone. Couples the redox reaction to proton translocation (for every two electrons transferred, four hydrogen ions are translocated across the cytoplasmic membrane), and thus conserves the redox energy in a proton gradient. This is NADH-quinone oxidoreductase subunit I from Helicobacter pylori (strain J99 / ATCC 700824) (Campylobacter pylori J99).